We begin with the raw amino-acid sequence, 429 residues long: C4-dicarboxylate transport protein (429 aa).

The next 8 helical transmembrane spans lie at 3–23 (VSIFKTLYFQVLTAITIGVLL), 44–64 (LIKMIIAPVIFCTVVTGIAGM), 76–96 (IALLYFEIVSTLALLIGLVVV), 144–164 (AFASGNILQVLLFAVLFGFAL), 184–204 (VIFGVINMIMRLAPLGAFGAM), 222–242 (LILCFYLTCILFVVLVLGTIA), 331–351 (TLLVVLLLSSKGAAGVTGSGF), and 352–372 (IVLAATISAVGHLPLAGLALI).

The protein belongs to the dicarboxylate/amino acid:cation symporter (DAACS) (TC 2.A.23) family.

The protein resides in the cell inner membrane. In terms of biological role, responsible for the transport of dicarboxylates such as succinate, fumarate, and malate from the periplasm across the membrane. This Yersinia pseudotuberculosis serotype O:1b (strain IP 31758) protein is C4-dicarboxylate transport protein.